A 480-amino-acid chain; its full sequence is Adenosylhomocysteinase (480 aa).

Substrate-binding residues include Thr63, Asp142, and Glu203. NAD(+) is bound at residue 204 to 206 (TTT). Substrate contacts are provided by Lys233 and Asp237. NAD(+) is bound by residues Asn238, 267 to 272 (GYGDVG), Glu290, Asn325, 346 to 348 (IGH), and Asn394.

It belongs to the adenosylhomocysteinase family. Requires NAD(+) as cofactor.

It is found in the cytoplasm. The enzyme catalyses S-adenosyl-L-homocysteine + H2O = L-homocysteine + adenosine. It functions in the pathway amino-acid biosynthesis; L-homocysteine biosynthesis; L-homocysteine from S-adenosyl-L-homocysteine: step 1/1. May play a key role in the regulation of the intracellular concentration of adenosylhomocysteine. In Xylella fastidiosa (strain Temecula1 / ATCC 700964), this protein is Adenosylhomocysteinase.